The following is a 94-amino-acid chain: Large ribosomal subunit protein uL23 (94 aa).

It belongs to the universal ribosomal protein uL23 family. As to quaternary structure, part of the 50S ribosomal subunit. Contacts protein L29, and trigger factor when it is bound to the ribosome.

Its function is as follows. One of the early assembly proteins it binds 23S rRNA. One of the proteins that surrounds the polypeptide exit tunnel on the outside of the ribosome. Forms the main docking site for trigger factor binding to the ribosome. The chain is Large ribosomal subunit protein uL23 from Exiguobacterium sibiricum (strain DSM 17290 / CCUG 55495 / CIP 109462 / JCM 13490 / 255-15).